A 373-amino-acid polypeptide reads, in one-letter code: Peptidoglycan recognition protein 4 (373 aa).

An N-terminal signal peptide occupies residues 1–17; that stretch reads MLPWLLVFSALGIQAWG. N-linked (GlcNAc...) asparagine glycosylation is found at Asn22, Asn39, Asn109, Asn145, and Asn247. 2 consecutive N-acetylmuramoyl-L-alanine amidase domains span residues 74–212 and 235–358; these read TPVN…ACPG and YGII…LSPG. 3 disulfide bridges follow: Cys210/Cys332, Cys226/Cys270, and Cys246/Cys252. Peptidoglycan is bound by residues Tyr263 and Tyr274. Interaction with murein regions lie at residues 293-302 and 353-354; these read QGSSTPGYDD and RT.

Belongs to the N-acetylmuramoyl-L-alanine amidase 2 family. As to quaternary structure, homodimer; disulfide-linked. Heterodimer with PGLYRP3; disulfide-linked. Post-translationally, N-glycosylated. In terms of tissue distribution, detected in skin epidermis, eccrine sweat glands and ducts, mucous cells in the submandibular salivary gland, mucous cells in the throat, ciliary body epithelial cells of the eye, small intestine, colon, stomach and in mature epithelial cells of the tongue (at protein level). High expression in skin and esophagus. Expressed also to a much lesser extent in the tonsils and thymus.

The protein resides in the secreted. Pattern receptor that binds to murein peptidoglycans (PGN) of Gram-positive bacteria. Has bactericidal activity towards Gram-positive bacteria. May kill Gram-positive bacteria by interfering with peptidoglycan biosynthesis. Also binds to Gram-negative bacteria, and has bacteriostatic activity towards Gram-negative bacteria. Plays a role in innate immunity. The polypeptide is Peptidoglycan recognition protein 4 (PGLYRP4) (Homo sapiens (Human)).